The following is an 827-amino-acid chain: Beta-galactosidase 2 (827 aa).

Positions 1 to 24 (MAASAVAVAFVVAVAAVLAAAASA) are cleaved as a signal peptide. Glu-182 functions as the Proton donor in the catalytic mechanism. N-linked (GlcNAc...) asparagine glycosylation occurs at Asn-209. Glu-251 serves as the catalytic Nucleophile. Residue Asn-458 is glycosylated (N-linked (GlcNAc...) asparagine). The region spanning 741-827 (DYEKAKVHLQ…KRAVVEAICG (87 aa)) is the SUEL-type lectin domain.

Belongs to the glycosyl hydrolase 35 family.

Its subcellular location is the secreted. It is found in the extracellular space. The protein resides in the apoplast. It carries out the reaction Hydrolysis of terminal non-reducing beta-D-galactose residues in beta-D-galactosides.. The polypeptide is Beta-galactosidase 2 (Oryza sativa subsp. japonica (Rice)).